Here is a 1388-residue protein sequence, read N- to C-terminus: ABC transporter G family member 52 (1388 aa).

Residues 1-24 (MDDAGEICSFSRSSSSAREDDEED) form a disordered region. The region spanning 135–406 (TNALCITKKI…FKSVGFKCPE (272 aa)) is the ABC transporter 1 domain. Residue 168-175 (GPPGSGKT) coordinates ATP. The ABC transmembrane type-2 1 domain maps to 484-697 (ELLKANIYRE…ALNALAVNEF (214 aa)). Transmembrane regions (helical) follow at residues 503-523 (LYIFKAIQLKLVAINAMTVFI), 541-561 (ALFYGMMMIVYSALAEMGPAI), 590-610 (IPISFLNTTVWVFLTYYVIGF), 621-641 (FLVLFVLCEVIYALFRFIVAL), 646-666 (VIASNMGPFCILIFMLSCGFI), 675-695 (WWIWLYWISPLMYALNALAVN), and 732-752 (ISIGALLGYVLLFNVLYTICL). The ABC transporter 2 domain occupies 791–1043 (ITFEDIRYSV…ELIKYFEAIQ (253 aa)). 836–843 (GVSGAGKT) serves as a coordination point for ATP. An ABC transmembrane type-2 2 domain is found at 1116–1330 (TQWLACLWKQ…TLNGLLTSQF (215 aa)). 7 helical membrane-spanning segments follow: residues 1136-1156 (IVVRYLFTIVVALLFGTMFWG), 1167-1183 (LFSIMGAMYSACMAMGV), 1223-1243 (FPYIFLQTIIYCVLVYAMVGY), 1250-1270 (FLWYLFFMFFTLSYFTFYGMM), 1280-1300 (MSAVVSTAFYNIWNLFSGFLI), 1305-1325 (IPVWWRWYYWMCPVAWTLNGL), and 1357-1377 (LLWVAAVAVVSFAILFAFLFG).

This sequence belongs to the ABC transporter superfamily. ABCG family. PDR (TC 3.A.1.205) subfamily.

The protein resides in the membrane. May be a general defense protein. The polypeptide is ABC transporter G family member 52 (Oryza sativa subsp. japonica (Rice)).